We begin with the raw amino-acid sequence, 118 residues long: uncharacterized protein (118 aa).

The signal sequence occupies residues 1–27 (MPIKEPDVWALIWSWLQTNLSSSSAQS).

This is an uncharacterized protein from Haemophilus influenzae (strain ATCC 51907 / DSM 11121 / KW20 / Rd).